Reading from the N-terminus, the 37-residue chain is Cytochrome b6-f complex subunit 5 (37 aa).

A helical membrane pass occupies residues 5–25 (LLCGIVLGLIPITLAGLFVAA).

Belongs to the PetG family. The 4 large subunits of the cytochrome b6-f complex are cytochrome b6, subunit IV (17 kDa polypeptide, PetD), cytochrome f and the Rieske protein, while the 4 small subunits are PetG, PetL, PetM and PetN. The complex functions as a dimer.

It localises to the cellular thylakoid membrane. Functionally, component of the cytochrome b6-f complex, which mediates electron transfer between photosystem II (PSII) and photosystem I (PSI), cyclic electron flow around PSI, and state transitions. PetG is required for either the stability or assembly of the cytochrome b6-f complex. In Cyanothece sp. (strain PCC 7425 / ATCC 29141), this protein is Cytochrome b6-f complex subunit 5.